Here is a 539-residue protein sequence, read N- to C-terminus: Alpha-aminoadipic semialdehyde dehydrogenase (539 aa).

The N-terminal 26 residues, 1–26, are a transit peptide targeting the mitochondrion; sequence MWRVPRRLCVQSVKTSKLSGPWSRPA. N6-acetyllysine; alternate occurs at positions 86, 94, and 97. An N6-succinyllysine; alternate mark is found at K86, K94, and K97. Residues 192 to 194, K218, 258 to 259, 274 to 275, 274 to 279, and 296 to 297 contribute to the NAD(+) site; these read TAF, GT, GS, GSTQVG, and EL. E296 serves as the catalytic Proton acceptor. C330 functions as the Nucleophile in the catalytic mechanism. Residue T331 participates in (S)-2-amino-6-oxohexanoate binding. E427 is an NAD(+) binding site. An N6-acetyllysine modification is found at K462. Residues G489 and A490 each coordinate (S)-2-amino-6-oxohexanoate. Residue K500 is modified to N6-acetyllysine. N6-succinyllysine is present on K537.

This sequence belongs to the aldehyde dehydrogenase family. In terms of assembly, homotetramer. Present in liver, kidney, brain and pancreas, and at lower levels in jejunum, duodenum, stomach and testes (at protein level).

Its subcellular location is the cytoplasm. It localises to the cytosol. The protein resides in the nucleus. The protein localises to the mitochondrion. The enzyme catalyses nonanal + NAD(+) + H2O = nonanoate + NADH + 2 H(+). It catalyses the reaction (S)-2-amino-6-oxohexanoate + NAD(+) + H2O = L-2-aminoadipate + NADH + 2 H(+). It carries out the reaction betaine aldehyde + NAD(+) + H2O = glycine betaine + NADH + 2 H(+). The catalysed reaction is an aldehyde + NAD(+) + H2O = a carboxylate + NADH + 2 H(+). The enzyme catalyses hexanal + NAD(+) + H2O = hexanoate + NADH + 2 H(+). It catalyses the reaction octanal + NAD(+) + H2O = octanoate + NADH + 2 H(+). It carries out the reaction (E)-non-2-enal + NAD(+) + H2O = (E)-non-2-enoate + NADH + 2 H(+). The catalysed reaction is (E)-4-hydroxynon-2-enal + NAD(+) + H2O = (E)-4-hydroxynon-2-enoate + NADH + 2 H(+). Its pathway is amine and polyamine biosynthesis; betaine biosynthesis via choline pathway; betaine from betaine aldehyde: step 1/1. Its function is as follows. Multifunctional enzyme mediating important protective effects. Metabolizes betaine aldehyde to betaine, an important cellular osmolyte and methyl donor. Protects cells from oxidative stress by metabolizing a number of lipid peroxidation-derived aldehydes. Involved in lysine catabolism. The polypeptide is Alpha-aminoadipic semialdehyde dehydrogenase (Mus musculus (Mouse)).